A 625-amino-acid chain; its full sequence is Zinc finger protein 652-A (625 aa).

Residues 80 to 255 (FFRDSKPINE…PSDKAKSEEK (176 aa)) are disordered. A compositionally biased stretch (basic and acidic residues) spans 82-100 (RDSKPINEVHSVKGERENS). The span at 101-127 (GESEEEEDDDDDDDDEDDEEGEEDEDE) shows a compositional bias: acidic residues. Residues 150–166 (KGDKGVAQDSSHIKTSS) show a composition bias toward basic and acidic residues. The segment covering 167–186 (DDEEGDSGEDDQDSHEDEEN) has biased composition (acidic residues). Over residues 240-255 (PKEPKSPSDKAKSEEK) the composition is skewed to basic and acidic residues. A C2H2-type 1 zinc finger spans residues 258 to 281 (LTCDKCPRVFNTRWYLEKHMNVTH). Residues 285–307 (QICDKCGKKFVLESELSLHLQTD) form a C2H2-type 2; degenerate zinc finger. 6 consecutive C2H2-type zinc fingers follow at residues 312 to 335 (IQCI…KIVH), 342 to 364 (FSCE…LVAH), 370 to 392 (FTCE…SLQH), 398 to 420 (FRCE…MSIH), 426 to 448 (FMCQ…MKTH), and 454 to 476 (FICE…RRTH). Residues 482–505 (YPCDVCGMRFRFSNMLKAHKEKCF) form a C2H2-type 9; degenerate zinc finger.

Belongs to the krueppel C2H2-type zinc-finger protein family.

It is found in the nucleus. Its function is as follows. May be involved in transcriptional regulation. The protein is Zinc finger protein 652-A (znf652-a) of Xenopus laevis (African clawed frog).